Reading from the N-terminus, the 158-residue chain is Small ribosomal subunit protein uS7 (158 aa).

This sequence belongs to the universal ribosomal protein uS7 family. In terms of assembly, part of the 30S ribosomal subunit. Contacts proteins S9 and S11.

In terms of biological role, one of the primary rRNA binding proteins, it binds directly to 16S rRNA where it nucleates assembly of the head domain of the 30S subunit. Is located at the subunit interface close to the decoding center, probably blocks exit of the E-site tRNA. The sequence is that of Small ribosomal subunit protein uS7 from Gluconacetobacter diazotrophicus (strain ATCC 49037 / DSM 5601 / CCUG 37298 / CIP 103539 / LMG 7603 / PAl5).